We begin with the raw amino-acid sequence, 334 residues long: Large ribosomal subunit protein uL3 (334 aa).

Over residues 1–10 the composition is skewed to basic residues; it reads MGMKKSRPRR. The disordered stretch occupies residues 1-20; it reads MGMKKSRPRRGSLAFSPRKR.

This sequence belongs to the universal ribosomal protein uL3 family. As to quaternary structure, part of the 50S ribosomal subunit. Forms a cluster with proteins L14 and L24e.

Its function is as follows. One of the primary rRNA binding proteins, it binds directly near the 3'-end of the 23S rRNA, where it nucleates assembly of the 50S subunit. The sequence is that of Large ribosomal subunit protein uL3 from Methanococcus maripaludis (strain C7 / ATCC BAA-1331).